Consider the following 988-residue polypeptide: UvrABC system protein A (988 aa).

33 to 40 (GLSGSGKS) serves as a coordination point for ATP. A C4-type zinc finger spans residues 255–282 (CPVCDYSLPELEPRLFSFNAPVGACPSC). 2 ABC transporter domains span residues 312-589 (WDRR…PRSL) and 609-938 (PNPK…QFLA). 642-649 (GVSGSGKS) contributes to the ATP binding site. The segment at 741–767 (CEACQGDGMIKVEMHFLPDVYVPCDVC) adopts a C4-type zinc-finger fold. The disordered stretch occupies residues 948 to 988 (ETRPAAMANKPDARPPRKVKPEKVAKATKTATKKTAKKKAS). Positions 958–972 (PDARPPRKVKPEKVA) are enriched in basic and acidic residues. Basic residues predominate over residues 978-988 (ATKKTAKKKAS).

It belongs to the ABC transporter superfamily. UvrA family. Forms a heterotetramer with UvrB during the search for lesions.

Its subcellular location is the cytoplasm. In terms of biological role, the UvrABC repair system catalyzes the recognition and processing of DNA lesions. UvrA is an ATPase and a DNA-binding protein. A damage recognition complex composed of 2 UvrA and 2 UvrB subunits scans DNA for abnormalities. When the presence of a lesion has been verified by UvrB, the UvrA molecules dissociate. In Xanthomonas campestris pv. campestris (strain ATCC 33913 / DSM 3586 / NCPPB 528 / LMG 568 / P 25), this protein is UvrABC system protein A.